Consider the following 178-residue polypeptide: uncharacterized protein (178 aa).

The interval 152-178 (KKLKGAEPKEHQAPNFEPPTEIFPESN) is disordered.

This sequence belongs to the EUO family.

This is an uncharacterized protein from Chlamydia pneumoniae (Chlamydophila pneumoniae).